The sequence spans 887 residues: GPMGIMGPRGPPGASGAPGPQGFQGPPGEPGEPGQTGPAGARGPPGPPGKAGEDGHPGKPGRSGERGVVGPQGARGFPGTPGIPGFKGIRGHNGIDGIKGQPGAPGVKGEPGAPGARGIPGERGRVGAPGPAGARGSDGSVGPVGPAGPIGSAGPPGFPGAPGPKGEIGPVGSPGASGPAGPRGEVGIPGVSGPVGPPGNGAAGIPGVAGAPGIPGPRGIPGPVGAAGATGARGIVGEPGPAGSKAGPQGIPGPSGEEGKRGSTGEIGPAGPPGPPGIRGSPGSRGIPGADGRAGVMGIPGSRGATGPAGVRGFPGSPGNIGPAGKEGPVGIPGIDGRPGPTGPAGARNIGFPGPKGPTGDNGDKGHAGIAGARGAPGPDGNNGAQGPPQGGKGEQGPAGPPGFQGIPGPAGTAGEAGKPGERGIPGEFGIPGPAGPRGERGPPGESGAAGPTGPIGNRGPSGPAGPDGNKGEPGVVGAPGTAGPSGPSGIPGERGAAGIPGPKGEKGEPGIRRDGARGAPGAVGAPGPAGANGDRGEAGPAGPAGPAGPRGSPGERGEVGPAGPNGFAGPAGAAGQPGAKGERGTRGDGGPPGATGFPGAAGRTGPPGPSGISGPPGPPGPAGKEGIRGPRGDQGPVGRSGETGASGPPGFAGEKTPGPQGIIGAPGFIGIPGSRGERGIPGVAGSVGEPGPIGIAGPPGARGPPGAVGNPGVNGAPGEAGRDGNPGSDGPPGRGHKGERGYPGAGAPGPQGPVGPTGKHGNRGEPGPAGVVGPTGAVGPRGPSGPQGIRGDKGEPGDKGPRGIPGIKGHNGIQGIPGIAGHHGDQGAPGSVGPAGPRGPAGPSGPVGKDGRTGHPGAVGPAGIRGSQGPAGPPGPPGPPGPPGPS.

Residues 1-42 (GPMGIMGPRGPPGASGAPGPQGFQGPPGEPGEPGQTGPAGAR) are compositionally biased toward low complexity. Residues 1-887 (GPMGIMGPRG…PGPPGPPGPS (887 aa)) are disordered. The span at 51–65 (AGEDGHPGKPGRSGE) shows a compositional bias: basic and acidic residues. Low complexity-rich tracts occupy residues 126–155 (VGAPGPAGARGSDGSVGPVGPAGPIGSAGP), 170–194 (PVGSPGASGPAGPRGEVGIPGVSGP), 221–236 (PGPVGAAGATGARGIV), 278–290 (IRGSPGSRGIPGA), 368–388 (AGIAGARGAPGPDGNNGAQGP), 444–455 (PGESGAAGPTGP), and 473–503 (EPGVVGAPGTAGPSGPSGIPGERGAAGIPGP). The segment covering 504-517 (KGEKGEPGIRRDGA) has biased composition (basic and acidic residues). 6 stretches are compositionally biased toward low complexity: residues 518–533 (RGAPGAVGAPGPAGAN), 560–580 (VGPAGPNGFAGPAGAAGQPGA), 595–605 (ATGFPGAAGRT), 658–673 (PGPQGIIGAPGFIGIP), 690–720 (EPGPIGIAGPPGARGPPGAVGNPGVNGAPGE), and 766–782 (EPGPAGVVGPTGAVGPR). A compositionally biased stretch (basic and acidic residues) spans 791-802 (RGDKGEPGDKGP). Over residues 872 to 887 (AGPPGPPGPPGPPGPS) the composition is skewed to pro residues.

Belongs to the fibrillar collagen family. In terms of assembly, trimers of one alpha 2(I) and two alpha 1(I) chains. Interacts (via C-terminus) with TMEM131 (via PapD-L domain); the interaction is direct and is involved in assembly and TRAPPIII ER-to-Golgi transport complex-dependent secretion of collagen. In terms of processing, prolines at the third position of the tripeptide repeating unit (G-X-Y) are hydroxylated in some or all of the chains. Forms the fibrils of tendon, ligaments and bones. In bones, the fibrils are mineralized with calcium hydroxyapatite.

It localises to the secreted. The protein localises to the extracellular space. Its subcellular location is the extracellular matrix. Type I collagen is a member of group I collagen (fibrillar forming collagen). The protein is Collagen alpha-2(I) chain of Hippopotamus amphibius (Hippopotamus).